Here is a 103-residue protein sequence, read N- to C-terminus: Large ribosomal subunit protein bL21 (103 aa).

Belongs to the bacterial ribosomal protein bL21 family. As to quaternary structure, part of the 50S ribosomal subunit. Contacts protein L20.

In terms of biological role, this protein binds to 23S rRNA in the presence of protein L20. The sequence is that of Large ribosomal subunit protein bL21 from Salmonella paratyphi A (strain ATCC 9150 / SARB42).